The following is a 109-amino-acid chain: Spermidine export protein MdtI (109 aa).

4 helical membrane-spanning segments follow: residues 6–26, 36–56, 64–84, and 88–108; these read WIHA…NVFL, IYGI…SQAV, AYAL…WVLF, and LNNK…LIKL.

This sequence belongs to the drug/metabolite transporter (DMT) superfamily. Small multidrug resistance (SMR) (TC 2.A.7.1) family. MdtI subfamily. As to quaternary structure, forms a complex with MdtJ.

The protein resides in the cell inner membrane. Functionally, catalyzes the excretion of spermidine. The polypeptide is Spermidine export protein MdtI (Klebsiella pneumoniae subsp. pneumoniae (strain ATCC 700721 / MGH 78578)).